Reading from the N-terminus, the 243-residue chain is Pyridoxine 5'-phosphate synthase (243 aa).

Asparagine 9 serves as a coordination point for 3-amino-2-oxopropyl phosphate. 11–12 (DH) is a 1-deoxy-D-xylulose 5-phosphate binding site. Arginine 20 contacts 3-amino-2-oxopropyl phosphate. The active-site Proton acceptor is the histidine 45. 1-deoxy-D-xylulose 5-phosphate is bound by residues arginine 47 and histidine 52. Glutamate 72 acts as the Proton acceptor in catalysis. Residue threonine 102 participates in 1-deoxy-D-xylulose 5-phosphate binding. The active-site Proton donor is histidine 193. Residues glycine 194 and 215-216 (GH) each bind 3-amino-2-oxopropyl phosphate.

The protein belongs to the PNP synthase family. In terms of assembly, homooctamer; tetramer of dimers.

It is found in the cytoplasm. The catalysed reaction is 3-amino-2-oxopropyl phosphate + 1-deoxy-D-xylulose 5-phosphate = pyridoxine 5'-phosphate + phosphate + 2 H2O + H(+). It functions in the pathway cofactor biosynthesis; pyridoxine 5'-phosphate biosynthesis; pyridoxine 5'-phosphate from D-erythrose 4-phosphate: step 5/5. In terms of biological role, catalyzes the complicated ring closure reaction between the two acyclic compounds 1-deoxy-D-xylulose-5-phosphate (DXP) and 3-amino-2-oxopropyl phosphate (1-amino-acetone-3-phosphate or AAP) to form pyridoxine 5'-phosphate (PNP) and inorganic phosphate. The sequence is that of Pyridoxine 5'-phosphate synthase from Shigella sonnei (strain Ss046).